The chain runs to 450 residues: Tubulin alpha-3 chain (450 aa).

Residue glutamine 11 coordinates GTP. Lysine 40 carries the post-translational modification N6-acetyllysine. The GTP site is built by glutamate 71, glycine 144, threonine 145, threonine 179, asparagine 206, and asparagine 228. Glutamate 71 serves as a coordination point for Mg(2+). Glutamate 254 is a catalytic residue.

Belongs to the tubulin family. As to quaternary structure, dimer of alpha and beta chains. A typical microtubule is a hollow water-filled tube with an outer diameter of 25 nm and an inner diameter of 15 nM. Alpha-beta heterodimers associate head-to-tail to form protofilaments running lengthwise along the microtubule wall with the beta-tubulin subunit facing the microtubule plus end conferring a structural polarity. Microtubules usually have 13 protofilaments but different protofilament numbers can be found in some organisms and specialized cells. Mg(2+) is required as a cofactor. Undergoes a tyrosination/detyrosination cycle, the cyclic removal and re-addition of a C-terminal tyrosine residue by the enzymes tubulin tyrosine carboxypeptidase (TTCP) and tubulin tyrosine ligase (TTL), respectively. Post-translationally, acetylation of alpha chains at Lys-40 stabilizes microtubules and affects affinity and processivity of microtubule motors. This modification has a role in multiple cellular functions, ranging from cell motility, cell cycle progression or cell differentiation to intracellular trafficking and signaling.

It is found in the cytoplasm. It localises to the cytoskeleton. The enzyme catalyses GTP + H2O = GDP + phosphate + H(+). Its function is as follows. Tubulin is the major constituent of microtubules, a cylinder consisting of laterally associated linear protofilaments composed of alpha- and beta-tubulin heterodimers. Microtubules grow by the addition of GTP-tubulin dimers to the microtubule end, where a stabilizing cap forms. Below the cap, tubulin dimers are in GDP-bound state, owing to GTPase activity of alpha-tubulin. The protein is Tubulin alpha-3 chain (TUBA3) of Zea mays (Maize).